The sequence spans 158 residues: Transcriptional repressor NrdR (158 aa).

A zinc finger spans residues 3 to 34 (CPYCGYPDSKVIDSRPTDDNTSIRRRRECLKC). In terms of domain architecture, ATP-cone spans 49 to 139 (ILVIKKDNRR…VYRQFKDINT (91 aa)).

It belongs to the NrdR family. The cofactor is Zn(2+).

Its function is as follows. Negatively regulates transcription of bacterial ribonucleotide reductase nrd genes and operons by binding to NrdR-boxes. This is Transcriptional repressor NrdR from Thermoanaerobacter sp. (strain X514).